A 284-amino-acid polypeptide reads, in one-letter code: MEMO1 family protein YN1551_0739 (284 aa).

The protein belongs to the MEMO1 family.

The protein is MEMO1 family protein YN1551_0739 of Saccharolobus islandicus (strain Y.N.15.51 / Yellowstone #2) (Sulfolobus islandicus).